Here is a 646-residue protein sequence, read N- to C-terminus: bZIP transcription factor 39 (646 aa).

The Cytoplasmic portion of the chain corresponds to 1–311; the sequence is MAEPALLDPT…KSKSKTKTKK (311 aa). A disordered region spans residues 25-172; the sequence is HELPLAGGGG…GGTVCEEEED (148 aa). The segment covering 43 to 53 has biased composition (low complexity); it reads LDGLEFDLPGD. The span at 59-69 shows a compositional bias: basic and acidic residues; the sequence is FLLRSPERDDS. Residues 71-98 are compositionally biased toward low complexity; sequence EGSAAGSGPTASPSSSPTTSASNSAVAN. Residues 103 to 113 are compositionally biased toward basic and acidic residues; that stretch reads EVKHEESDEGR. A compositionally biased stretch (acidic residues) spans 159–172; that stretch reads DSDEGGTVCEEEED. The 61-residue stretch at 172–232 folds into the bZIP domain; the sequence is DERRAARLMR…AENATLRQQL (61 aa). Positions 174-205 are basic motif; it reads RRAARLMRNRESAQLSRQRKKRYVEELEEKVK. The segment at 211–218 is leucine-zipper; the sequence is INDLNSRI. Residues 272 to 308 form a disordered region; that stretch reads LVPIPRLKPQQPVPSSKVVKKPESKKTVENKSKSKTK. Residues 279-288 show a composition bias toward low complexity; sequence KPQQPVPSSK. Positions 291–303 are enriched in basic and acidic residues; sequence KKPESKKTVENKS. Residues 312–332 form a helical membrane-spanning segment; sequence VASVSLLGLLLIMLVFGAFIP. Topologically, residues 333–646 are lumenal; sequence GFNHNFGMCG…FKSSSPHLVN (314 aa). Residues Asn-371, Asn-399, Asn-525, Asn-530, Asn-565, and Asn-571 are each glycosylated (N-linked (GlcNAc...) asparagine). The interval 560-585 is disordered; it reads TGKTANNTEPFNRTSESSSKLPDSKP. Positions 562 to 585 are enriched in polar residues; it reads KTANNTEPFNRTSESSSKLPDSKP.

Belongs to the bZIP family. As to expression, highly expressed in leaf blade, and at lower levels in roots, leaf sheaths, flowers and seeds.

It is found in the endoplasmic reticulum membrane. It localises to the nucleus. Functionally, transcription factor involved in endoplasmic reticulum (ER) stress response. Acts as a ER stress sensor and activates the transcription factor BZIP50 and the chaperone BIP1. The protein is bZIP transcription factor 39 of Oryza sativa subsp. japonica (Rice).